The primary structure comprises 940 residues: Isoleucine--tRNA ligase (940 aa).

Positions 58–68 (PYANGSIHIGH) match the 'HIGH' region motif. Position 564 (E564) interacts with L-isoleucyl-5'-AMP. Positions 605–609 (KMSKS) match the 'KMSKS' region motif. An ATP-binding site is contributed by K608. Residues C903, C906, C923, and C926 each contribute to the Zn(2+) site.

This sequence belongs to the class-I aminoacyl-tRNA synthetase family. IleS type 1 subfamily. As to quaternary structure, monomer. Zn(2+) serves as cofactor.

Its subcellular location is the cytoplasm. It carries out the reaction tRNA(Ile) + L-isoleucine + ATP = L-isoleucyl-tRNA(Ile) + AMP + diphosphate. Catalyzes the attachment of isoleucine to tRNA(Ile). As IleRS can inadvertently accommodate and process structurally similar amino acids such as valine, to avoid such errors it has two additional distinct tRNA(Ile)-dependent editing activities. One activity is designated as 'pretransfer' editing and involves the hydrolysis of activated Val-AMP. The other activity is designated 'posttransfer' editing and involves deacylation of mischarged Val-tRNA(Ile). The protein is Isoleucine--tRNA ligase of Shewanella sp. (strain MR-4).